The sequence spans 485 residues: Glutamyl-tRNA(Gln) amidotransferase subunit A (485 aa).

Catalysis depends on charge relay system residues lysine 79 and serine 154. The active-site Acyl-ester intermediate is the serine 178.

It belongs to the amidase family. GatA subfamily. In terms of assembly, heterotrimer of A, B and C subunits.

The enzyme catalyses L-glutamyl-tRNA(Gln) + L-glutamine + ATP + H2O = L-glutaminyl-tRNA(Gln) + L-glutamate + ADP + phosphate + H(+). In terms of biological role, allows the formation of correctly charged Gln-tRNA(Gln) through the transamidation of misacylated Glu-tRNA(Gln) in organisms which lack glutaminyl-tRNA synthetase. The reaction takes place in the presence of glutamine and ATP through an activated gamma-phospho-Glu-tRNA(Gln). The sequence is that of Glutamyl-tRNA(Gln) amidotransferase subunit A from Bacillus pumilus (strain SAFR-032).